Reading from the N-terminus, the 968-residue chain is RNA polymerase-associated protein RapA (968 aa).

One can recognise a Helicase ATP-binding domain in the interval 164-334 (DVGRRHAPRV…FARLRLLDPS (171 aa)). Residue 177–184 (DEVGLGKT) participates in ATP binding. The short motif at 280 to 283 (DEAH) is the DEAH box element. Residues 490–644 (RVEWLMGHLT…TCPTGRAIYD (155 aa)) form the Helicase C-terminal domain.

It belongs to the SNF2/RAD54 helicase family. RapA subfamily. In terms of assembly, interacts with the RNAP. Has a higher affinity for the core RNAP than for the holoenzyme. Its ATPase activity is stimulated by binding to RNAP.

Transcription regulator that activates transcription by stimulating RNA polymerase (RNAP) recycling in case of stress conditions such as supercoiled DNA or high salt concentrations. Probably acts by releasing the RNAP, when it is trapped or immobilized on tightly supercoiled DNA. Does not activate transcription on linear DNA. Probably not involved in DNA repair. This chain is RNA polymerase-associated protein RapA, found in Citrobacter koseri (strain ATCC BAA-895 / CDC 4225-83 / SGSC4696).